The chain runs to 1259 residues: Neural cell adhesion molecule L1 (1259 aa).

The first 19 residues, 1–19 (MVMMLWYVLPLLLCSPCLL), serve as a signal peptide directing secretion. The Extracellular segment spans residues 20–1122 (IQIPDEYKGH…VSTTGSFASE (1103 aa)). Ig-like C2-type domains lie at 35–128 (PVIT…HEIQ), 138–225 (PKET…EPID), 239–327 (PRLL…YYVT), 332–419 (PYWL…AYIY), 424–506 (PARI…NNVT), and 517–600 (TQIT…DEVE). 2 cysteine pairs are disulfide-bonded: cysteine 57–cysteine 113 and cysteine 157–cysteine 208. 4 N-linked (GlcNAc...) asparagine glycosylation sites follow: asparagine 100, asparagine 202, asparagine 246, and asparagine 293. 2 disulfides stabilise this stretch: cysteine 263–cysteine 311 and cysteine 353–cysteine 403. Asparagine 432, asparagine 489, and asparagine 504 each carry an N-linked (GlcNAc...) asparagine glycan. Cysteine 447 and cysteine 496 are joined by a disulfide. The cysteines at positions 538 and 590 are disulfide-linked. Short sequence motifs (cell attachment site) lie at residues 553-555 (RGD) and 562-564 (RGD). Fibronectin type-III domains lie at 613–711 (PVPH…TPEA), 716–809 (NPVD…SGED), 811–916 (PQVS…PEGV), 919–1014 (HPEA…MALF), and 1016–1116 (KPDF…VSTT). An N-linked (GlcNAc...) asparagine glycan is attached at asparagine 670. Residues 697–724 (GEPSPVSETVVTPEAAPEKNPVDVRGEG) form a disordered region. The span at 712–724 (APEKNPVDVRGEG) shows a compositional bias: basic and acidic residues. 11 N-linked (GlcNAc...) asparagine glycosylation sites follow: asparagine 725, asparagine 776, asparagine 824, asparagine 848, asparagine 875, asparagine 968, asparagine 978, asparagine 1021, asparagine 1029, asparagine 1072, and asparagine 1106. A helical transmembrane segment spans residues 1123–1145 (GWFIAFVSAIILLLLILLILCFI). The Cytoplasmic portion of the chain corresponds to 1146-1259 (KRSKGGKYSV…SPINPAVALE (114 aa)). A phosphoserine mark is found at serine 1165, arginine 1179, serine 1180, serine 1183, serine 1196, serine 1245, serine 1246, and serine 1250. Disordered stretches follow at residues 1182–1209 (ESDNEEKAFGSSQPSLNGDIKPLGSDDS) and 1228–1259 (IGQYSGKKEKEAAGGNDSSGATSPINPAVALE). Positions 1243–1252 (NDSSGATSPI) are enriched in polar residues.

The protein belongs to the immunoglobulin superfamily. L1/neurofascin/NgCAM family. As to quaternary structure, interacts with SHTN1; the interaction occurs in axonal growth cones. Interacts with isoform 2 of BSG. Isoform 2 is predominantly found in the brain, while isoform 1 is found in the peripheral nervous system.

It localises to the cell membrane. Its subcellular location is the cell projection. It is found in the growth cone. Its function is as follows. Neural cell adhesion molecule involved in the dynamics of cell adhesion and in the generation of transmembrane signals at tyrosine kinase receptors. During brain development, critical in multiple processes, including neuronal migration, axonal growth and fasciculation, and synaptogenesis. In the mature brain, plays a role in the dynamics of neuronal structure and function, including synaptic plasticity. The polypeptide is Neural cell adhesion molecule L1 (L1cam) (Rattus norvegicus (Rat)).